A 141-amino-acid chain; its full sequence is Transmembrane protein 216 (141 aa).

4 helical membrane passes run 15–35, 49–69, 82–102, and 115–135; these read ILFF…LFIF, LVLD…RLFF, LGIS…YLLL, and SILL…LTAF.

In terms of assembly, part of the tectonic-like complex (also named B9 complex). Interacts with TMEM107.

The protein localises to the membrane. It localises to the cytoplasm. Its subcellular location is the cytoskeleton. It is found in the cilium basal body. Its function is as follows. Part of the tectonic-like complex which is required for tissue-specific ciliogenesis and may regulate ciliary membrane composition. The protein is Transmembrane protein 216 (TMEM216) of Bos taurus (Bovine).